Here is a 98-residue protein sequence, read N- to C-terminus: NADH-ubiquinone oxidoreductase chain 4L (98 aa).

3 helical membrane passes run 1–21 (MSLA…GLLM), 25–45 (HLMS…VMAT), and 59–81 (MPII…LVMV).

It belongs to the complex I subunit 4L family. Core subunit of respiratory chain NADH dehydrogenase (Complex I) which is composed of 45 different subunits.

The protein resides in the mitochondrion inner membrane. The enzyme catalyses a ubiquinone + NADH + 5 H(+)(in) = a ubiquinol + NAD(+) + 4 H(+)(out). Its function is as follows. Core subunit of the mitochondrial membrane respiratory chain NADH dehydrogenase (Complex I) which catalyzes electron transfer from NADH through the respiratory chain, using ubiquinone as an electron acceptor. Part of the enzyme membrane arm which is embedded in the lipid bilayer and involved in proton translocation. In Equus asinus (Donkey), this protein is NADH-ubiquinone oxidoreductase chain 4L (MT-ND4L).